A 147-amino-acid chain; its full sequence is Myosin regulatory light chain (147 aa).

Position 1 is an N-acetylthreonine (Thr1). 3 EF-hand domains span residues 2–37 (ASAD…LGKN), 73–108 (EQSK…LGDA), and 109–144 (LTSS…GYPL). Ca(2+)-binding residues include Asp15, Asp17, Asp19, Lys21, Glu26, Asp86, Asn90, Thr92, and Glu97.

The polypeptide is Myosin regulatory light chain (Physarum polycephalum (Slime mold)).